A 326-amino-acid polypeptide reads, in one-letter code: Phenylalanine--tRNA ligase alpha subunit (326 aa).

E251 is a Mg(2+) binding site.

The protein belongs to the class-II aminoacyl-tRNA synthetase family. Phe-tRNA synthetase alpha subunit type 1 subfamily. As to quaternary structure, tetramer of two alpha and two beta subunits. The cofactor is Mg(2+).

The protein localises to the cytoplasm. The enzyme catalyses tRNA(Phe) + L-phenylalanine + ATP = L-phenylalanyl-tRNA(Phe) + AMP + diphosphate + H(+). This is Phenylalanine--tRNA ligase alpha subunit from Pseudoalteromonas atlantica (strain T6c / ATCC BAA-1087).